Reading from the N-terminus, the 349-residue chain is Heat-inducible transcription repressor HrcA (349 aa).

It belongs to the HrcA family.

In terms of biological role, negative regulator of class I heat shock genes (grpE-dnaK-dnaJ and groELS operons). Prevents heat-shock induction of these operons. This chain is Heat-inducible transcription repressor HrcA, found in Xylella fastidiosa (strain M23).